The chain runs to 686 residues: Rhophilin-2 (686 aa).

The REM-1 domain maps to 26-100 (NPLAQTGRSK…LEGLNISVGV (75 aa)). Residues 46–66 (QILKAVRMRTGAENLLKVATN) form an interaction with Rho region. A BRO1 domain is found at 111 to 460 (PLIPLGLKET…RLTYAQHQEE (350 aa)). Residues 515 to 593 (RSIRFTAEEG…DEIEMKVVSL (79 aa)) enclose the PDZ domain. Phosphothreonine is present on Thr-655.

Belongs to the RHPN family. In terms of assembly, interacts with GTP-bound RhoA and RhoB. Interacts with both GTP- and GDP-bound RhoA. According to PubMed:12473120, it does not interact with RhoA. Interacts with KRT18. As to expression, widely expressed. Highly expressed in prostate, trachea, stomach, colon, thyroid and pancreas. Expressed at lower level in brain, spinal cord, kidney, placenta and liver.

It is found in the cytoplasm. Its subcellular location is the perinuclear region. Binds specifically to GTP-Rho. May function in a Rho pathway to limit stress fiber formation and/or increase the turnover of F-actin structures in the absence of high levels of RhoA activity. In Homo sapiens (Human), this protein is Rhophilin-2 (RHPN2).